The primary structure comprises 922 residues: MVRRTGWGGSRRQRGRWGDLGPSSVPLLPMALPLPASPCRGTGGRRISVFSLSPAPRTRSCSSSVFPPASGSPCLVIQEAGASQTPHNVLPTPTTPSTQAHPTMIHTSASPSWGSHSTPPLASATPPPSCPRPQDHPGLRMGPLIPEQDYERLEDCDPEGSQDSPIHGEDHQPLLHVPEGLRGSWHHIQNLDSFFTKIYSYHQRNGFACILLEDVFQLGQFIFIVTFTTFLLRCVDYNVLFNNQPKNHTRRGPLHSKVTLSDAILPSAQCAEKIHDSPLLVFLLVLAAGFWLFQLLRSVCNLFSYWDIQVFYREALHIPPEELSSVPWAEVQSRLLELQRSGGLCVQPRPLTELDVHHRILRYTNYQVALANKGLLPARCPLPWGSSAAFLSRGLALNVDLLLFRGPFSLFRGGWELPEAYKRSDLRGVLANRWRRTVLLLAAVNLALSPLVLAWQVLHAFYSHVELLRREPGAFGARRWSRLARLQLRHFNELPHELRARLGRAYRPAAAFLRAAEPPAPLRALLARQLVFFSGALFAALLVLTIYDEDVLAVEHVLTTMTALGVTATVARSFIPEEQCQGRSSQLLLQAALAHMHYLPEEPGATGARASSYWQMAQLLQYRAVSLLEELLSPLLTPLFLLFWFRPRALEIIDFFHHFTVDVAGVGDICSFALMDVKRHGHPQWLSEGQTEASLSQRAEDGKTELSLMRFSLAHPQWQPPGHSSKFLGHLRGRVQQDAAAWGAPSTRSPPTPGVLSDCTSPLPEAFLANLLVNPRPPQRDLSPTAPCPAAATASLLASISRMVQDPSCVSPGGTGGQKLTQLPELVSAEMSLHAIYLHQLHQQQQQELWGEASASSPSRPWSSPSQPGSPDEEKPSWSSDGSSPASSPRQQWGTQRAQNLFPKGFQENTDTQKEPLTGPLH.

Disordered stretches follow at residues 1 to 22 (MVRR…DLGP) and 85 to 144 (TPHN…MGPL). Topologically, residues 1–206 (MVRRTGWGGS…KIYSYHQRNG (206 aa)) are cytoplasmic. Residues 85 to 114 (TPHNVLPTPTTPSTQAHPTMIHTSASPSWG) show a composition bias toward polar residues. Residues 115-124 (SHSTPPLASA) show a composition bias toward low complexity. The Tyrosine-based sorting signal signature appears at 150-153 (YERL). Residues 207–227 (FACILLEDVFQLGQFIFIVTF) form a helical membrane-spanning segment. Over 228–275 (TTFLLRCVDYNVLFNNQPKNHTRRGPLHSKVTLSDAILPSAQCAEKIH) the chain is Lumenal. The chain crosses the membrane as a helical span at residues 276–296 (DSPLLVFLLVLAAGFWLFQLL). Residues 297–437 (RSVCNLFSYW…GVLANRWRRT (141 aa)) lie on the Cytoplasmic side of the membrane. An intramembrane segment occupies 438–458 (VLLLAAVNLALSPLVLAWQVL). Residues 459–523 (HAFYSHVELL…RAAEPPAPLR (65 aa)) lie on the Cytoplasmic side of the membrane. Residues 524-544 (ALLARQLVFFSGALFAALLVL) traverse the membrane as a helical segment. The Lumenal segment spans residues 545–550 (TIYDED). The helical transmembrane segment at 551–571 (VLAVEHVLTTMTALGVTATVA) threads the bilayer. Residues 572–624 (RSFIPEEQCQGRSSQLLLQAALAHMHYLPEEPGATGARASSYWQMAQLLQYRA) are Cytoplasmic-facing. An intramembrane segment occupies 625–645 (VSLLEELLSPLLTPLFLLFWF). Residues 646–922 (RPRALEIIDF…QKEPLTGPLH (277 aa)) lie on the Cytoplasmic side of the membrane. The disordered stretch occupies residues 848 to 922 (ELWGEASASS…QKEPLTGPLH (75 aa)). Composition is skewed to low complexity over residues 854 to 870 (SASS…QPGS) and 877 to 889 (SWSS…ASSP). The span at 890–899 (RQQWGTQRAQ) shows a compositional bias: polar residues.

Belongs to the ATG9 family. In terms of assembly, homotrimer; forms a homotrimer with a central pore that forms a path between the two membrane leaflets. As to expression, expressed in heart, brain, and placenta and testis.

The protein localises to the preautophagosomal structure membrane. The catalysed reaction is a 1,2-diacyl-sn-glycero-3-phosphocholine(in) = a 1,2-diacyl-sn-glycero-3-phosphocholine(out). The enzyme catalyses a 1,2-diacyl-sn-glycero-3-phospho-L-serine(in) = a 1,2-diacyl-sn-glycero-3-phospho-L-serine(out). It catalyses the reaction a 1,2-diacyl-sn-glycero-3-phosphoethanolamine(in) = a 1,2-diacyl-sn-glycero-3-phosphoethanolamine(out). Functionally, phospholipid scramblase involved in autophagy by mediating autophagosomal membrane expansion. Cycles between the preautophagosomal structure/phagophore assembly site (PAS) and the cytoplasmic vesicle pool and supplies membrane for the growing autophagosome. Lipid scramblase activity plays a key role in preautophagosomal structure/phagophore assembly by distributing the phospholipids that arrive through ATG2 (ATG2A or ATG2B) from the cytoplasmic to the luminal leaflet of the bilayer, thereby driving autophagosomal membrane expansion. In addition to autophagy, also plays a role in necrotic cell death. In Mus musculus (Mouse), this protein is Autophagy-related protein 9B.